The primary structure comprises 167 residues: MSKQELEIKTYVSDLLQERAELFLVDIAFSGTHSRRKILVILDKDSGILIDECGEFSRALGNLIEENNLFGDNAYVLEVSSPGMDRPLLVSRQYKRRIGNTLSFLLNDGTQFDAVLESVSEEGVVVMPAPQKVKKSNKKEAVVDVAIEPRKLRFEEIKKCNLIVSFK.

Belongs to the RimP family.

It localises to the cytoplasm. In terms of biological role, required for maturation of 30S ribosomal subunits. In Cytophaga hutchinsonii (strain ATCC 33406 / DSM 1761 / CIP 103989 / NBRC 15051 / NCIMB 9469 / D465), this protein is Ribosome maturation factor RimP.